A 38-amino-acid chain; its full sequence is Potassium channel toxin alpha-KTx 2.10 (38 aa).

3 cysteine pairs are disulfide-bonded: Cys-7–Cys-29, Cys-13–Cys-34, and Cys-17–Cys-36.

In terms of tissue distribution, expressed by the venom gland.

Its subcellular location is the secreted. Blocks human voltage-gated potassium (Kv) channel Kv1.2/KCNA2. Does not inhibit human Kv1.1/KCNA1 at 100nM concentration. The protein is Potassium channel toxin alpha-KTx 2.10 of Centruroides bonito (Scorpion).